The primary structure comprises 368 residues: MNLPIERYADLLAEKAKNLTALLVPFNPPELEVFESETSHFRMRAEFRVWHDTNEVGENELYHIMFDQETKQRYRVEQFPIANHLINKMMSSLLAEIKGNELLTRKLFQVDYLSTLSGEIAVSMLYHKKLNEEWQAEAAALKARLEHQGFKVQIIGRATKQKIALDRDYVEEVLPVDGRNLIYRQVENSFTQPNAKMNIKMLEWARSCTRHSSGDLLELYCGNGNFSIALAENFRQVLATEISKSSVQSAQYNIEQNGIDNLQIIRMSAEEFTQAMNGVREFNRLKGIDLKAYDCNTIFVDPPRAGLDQDTLNMVQAYERILYISCNPYTLAENLRQLSLTHRIERAALFDQFPYTHHVESGVWLIRK.

5 residues coordinate S-adenosyl-L-methionine: glutamine 192, tyrosine 220, asparagine 225, glutamate 241, and aspartate 301. Cysteine 326 acts as the Nucleophile in catalysis. Glutamate 360 serves as the catalytic Proton acceptor.

It belongs to the class I-like SAM-binding methyltransferase superfamily. RNA M5U methyltransferase family. TrmA subfamily.

The enzyme catalyses uridine(54) in tRNA + S-adenosyl-L-methionine = 5-methyluridine(54) in tRNA + S-adenosyl-L-homocysteine + H(+). It carries out the reaction uridine(341) in tmRNA + S-adenosyl-L-methionine = 5-methyluridine(341) in tmRNA + S-adenosyl-L-homocysteine + H(+). Functionally, dual-specificity methyltransferase that catalyzes the formation of 5-methyluridine at position 54 (m5U54) in all tRNAs, and that of position 341 (m5U341) in tmRNA (transfer-mRNA). This Actinobacillus pleuropneumoniae serotype 7 (strain AP76) protein is tRNA/tmRNA (uracil-C(5))-methyltransferase.